We begin with the raw amino-acid sequence, 572 residues long: Methionine--tRNA ligase (572 aa).

The short motif at 11–21 (PYINGIKHLGN) is the 'HIGH' region element. Residues cysteine 143, cysteine 146, cysteine 156, and cysteine 159 each coordinate Zn(2+). Residues 346–350 (QFSTS) carry the 'KMSKS' region motif. Threonine 349 lines the ATP pocket.

Belongs to the class-I aminoacyl-tRNA synthetase family. MetG type 1 subfamily. Monomer. The cofactor is Zn(2+).

Its subcellular location is the cytoplasm. It catalyses the reaction tRNA(Met) + L-methionine + ATP = L-methionyl-tRNA(Met) + AMP + diphosphate. Its function is as follows. Is required not only for elongation of protein synthesis but also for the initiation of all mRNA translation through initiator tRNA(fMet) aminoacylation. In Ruegeria pomeroyi (strain ATCC 700808 / DSM 15171 / DSS-3) (Silicibacter pomeroyi), this protein is Methionine--tRNA ligase.